Here is a 306-residue protein sequence, read N- to C-terminus: Tyrosine recombinase EUBREC_2677 (306 aa).

The 83-residue stretch at 2–84 folds into the Core-binding (CB) domain; the sequence is NNLQTHISSY…SIKAFFHYLE (83 aa). A Tyr recombinase domain is found at 106–296; the sequence is ILPKTIPLYI…AVSKQKDILI (191 aa). Catalysis depends on residues Arg-155, Lys-179, His-248, Arg-251, and His-274. Tyr-283 serves as the catalytic O-(3'-phospho-DNA)-tyrosine intermediate.

Belongs to the 'phage' integrase family.

It localises to the cytoplasm. In terms of biological role, site-specific tyrosine recombinase, which acts by catalyzing the cutting and rejoining of the recombining DNA molecules. This Agathobacter rectalis (strain ATCC 33656 / DSM 3377 / JCM 17463 / KCTC 5835 / VPI 0990) (Eubacterium rectale) protein is Tyrosine recombinase EUBREC_2677.